The sequence spans 296 residues: Formamidopyrimidine-DNA glycosylase (296 aa).

Catalysis depends on P2, which acts as the Schiff-base intermediate with DNA. E3 acts as the Proton donor in catalysis. Residue K58 is the Proton donor; for beta-elimination activity of the active site. DNA contacts are provided by H106, R125, and K167. The FPG-type zinc finger occupies R258 to P294. The Proton donor; for delta-elimination activity role is filled by R284.

This sequence belongs to the FPG family. As to quaternary structure, monomer. It depends on Zn(2+) as a cofactor.

It carries out the reaction Hydrolysis of DNA containing ring-opened 7-methylguanine residues, releasing 2,6-diamino-4-hydroxy-5-(N-methyl)formamidopyrimidine.. The catalysed reaction is 2'-deoxyribonucleotide-(2'-deoxyribose 5'-phosphate)-2'-deoxyribonucleotide-DNA = a 3'-end 2'-deoxyribonucleotide-(2,3-dehydro-2,3-deoxyribose 5'-phosphate)-DNA + a 5'-end 5'-phospho-2'-deoxyribonucleoside-DNA + H(+). Functionally, involved in base excision repair of DNA damaged by oxidation or by mutagenic agents. Acts as a DNA glycosylase that recognizes and removes damaged bases. Has a preference for oxidized purines, such as 7,8-dihydro-8-oxoguanine (8-oxoG). Has AP (apurinic/apyrimidinic) lyase activity and introduces nicks in the DNA strand. Cleaves the DNA backbone by beta-delta elimination to generate a single-strand break at the site of the removed base with both 3'- and 5'-phosphates. The polypeptide is Formamidopyrimidine-DNA glycosylase (Methylobacterium radiotolerans (strain ATCC 27329 / DSM 1819 / JCM 2831 / NBRC 15690 / NCIMB 10815 / 0-1)).